Consider the following 126-residue polypeptide: UPF0102 protein BCAN_A0183 (126 aa).

The protein belongs to the UPF0102 family.

The protein is UPF0102 protein BCAN_A0183 of Brucella canis (strain ATCC 23365 / NCTC 10854 / RM-666).